The sequence spans 605 residues: Sulfite reductase [NADPH] flavoprotein alpha-component (605 aa).

The Flavodoxin-like domain maps to 70-208; sequence LTIIYASQTG…PAAEWRVKAL (139 aa). FMN contacts are provided by residues 76–81, 123–126, and 159–168; these read SQTGNA, STHG, and LGDSSYEFFC. Positions 240–454 constitute an FAD-binding FR-type domain; sequence QNPYEATLLT…VEENNNFKLP (215 aa). FAD contacts are provided by residues Thr328, Gly362, 392-395, 410-412, and 425-428; these read RLYS, TVG, and GGAS. Residues 525–526, 531–535, and Asp567 contribute to the NADP(+) site; these read SR and KVYVQ. Tyr605 serves as a coordination point for FAD.

The protein belongs to the NADPH-dependent sulphite reductase flavoprotein subunit CysJ family. This sequence in the N-terminal section; belongs to the flavodoxin family. In the C-terminal section; belongs to the flavoprotein pyridine nucleotide cytochrome reductase family. Alpha(8)-beta(8). The alpha component is a flavoprotein, the beta component is a hemoprotein. The cofactor is FAD. Requires FMN as cofactor.

The catalysed reaction is hydrogen sulfide + 3 NADP(+) + 3 H2O = sulfite + 3 NADPH + 4 H(+). It participates in sulfur metabolism; hydrogen sulfide biosynthesis; hydrogen sulfide from sulfite (NADPH route): step 1/1. Functionally, component of the sulfite reductase complex that catalyzes the 6-electron reduction of sulfite to sulfide. This is one of several activities required for the biosynthesis of L-cysteine from sulfate. The flavoprotein component catalyzes the electron flow from NADPH -&gt; FAD -&gt; FMN to the hemoprotein component. In Photobacterium profundum (strain SS9), this protein is Sulfite reductase [NADPH] flavoprotein alpha-component.